The primary structure comprises 1744 residues: Complement C4-B (1744 aa).

The first 19 residues, 1–19, serve as a signal peptide directing secretion; that stretch reads MRLLWGLIWASSFFTLSLQ. An intrachain disulfide couples cysteine 68 to cysteine 97. Asparagine 226 carries N-linked (GlcNAc...) asparagine glycosylation. Cysteine 635 and cysteine 669 form a disulfide bridge. A propeptide spanning residues 676-679 is cleaved from the precursor; that stretch reads RKKR. Cystine bridges form between cysteine 702/cysteine 728, cysteine 703/cysteine 735, and cysteine 716/cysteine 736. The region spanning 702 to 736 is the Anaphylatoxin-like domain; the sequence is CCQDGVTRLPMMRSCEQRAARVQQPDCREPFLSCC. N-linked (GlcNAc...) asparagine glycosylation occurs at asparagine 862. A Phosphoserine modification is found at serine 918. The segment at residues 1010-1013 is a cross-link (isoglutamyl cysteine thioester (Cys-Gln)); sequence CGEQ. Residues asparagine 1328 and asparagine 1391 are each glycosylated (N-linked (GlcNAc...) asparagine). A sulfotyrosine mark is found at tyrosine 1417, tyrosine 1420, and tyrosine 1422. The propeptide occupies 1447–1453; sequence RRNRRRR. Disulfide bonds link cysteine 1471–cysteine 1535, cysteine 1583–cysteine 1588, cysteine 1595–cysteine 1673, cysteine 1618–cysteine 1742, and cysteine 1718–cysteine 1727. Positions 1595–1742 constitute an NTR domain; the sequence is CPRQRRALER…FLQEYGTQGC (148 aa).

In absence of complement activation, circulates in blood as a disulfide-linked trimer of an alpha, beta and gamma chain. In terms of assembly, complement C4b is composed of complement C4b-A, complement C4 beta and complement C4 gamma chains that are associated via disulfide bonds. Non-enzymatic component of the C3 convertase, also named C4bC2b, composed of the serine protease complement C2b (C2), as well as complement C4b. Non-enzymatic component of the C5 convertase, also named C4bC2bC3b, composed of the serine protease complement C2b (C2), complement C3b, as well as complement C4b. Interacts with CR1 (via Sushi 1 and Sushi 2 domains). As to quaternary structure, (Microbial infection) Binds B.burgdorferi OspC, the interaction is inhibited by complement factor C2. This binding may inhibit the complement cascade and allow the bacteria to survive in the host bloodstream. In terms of processing, prior to secretion, the single-chain precursor is enzymatically cleaved by plasminogen (PLG) to yield non-identical chains alpha, beta and gamma. During activation of the complement systems, the alpha chain is cleaved into C4a and C4b by different proteases depending on the complement pathway: C4b stays linked to the beta and gamma chains, while C4a is released in the plasma. The alpha chain is cleaved by C1S to generate C4a and C4b following activation by the classical complement system. The alpha chain is cleaved to generate C4a and C4b by MASP2 following activation by the lectin complement system. The alpha chain is cleaved by GZMK to generate C4a and C4b following activation by the GZMK complement system. Further degradation of C4b by C1 into the inactive fragments C4c and C4d blocks the generation of C3 convertase. The proteolytic cleavages often are incomplete so that many structural forms can be found in plasma. Post-translationally, upon activation, the internal thioester bond reacts with carbohydrate antigens on the target surface to form amide or ester bonds, leading to covalent association with the surface of pathogens. Complement C4b interacts with complement C3b via a thioester linkage. In terms of processing, N- and O-glycosylated. O-glycosylated with a core 1 or possibly core 8 glycan. Complement component C4 is expressed at highest levels in the liver, at moderate levels in the adrenal cortex, adrenal medulla, thyroid gland, and the kidney, and at lowest levels in the heart, ovary, small intestine, thymus, pancreas and spleen. The extra-hepatic sites of expression may be important for the local protection and inflammatory response.

It is found in the secreted. The protein resides in the synapse. The protein localises to the cell projection. It localises to the axon. Its subcellular location is the dendrite. It is found in the cell surface. In terms of biological role, precursor of non-enzymatic components of the classical, lectin and GZMK complement pathways, which consist in a cascade of proteins that leads to phagocytosis and breakdown of pathogens and signaling that strengthens the adaptive immune system. Functionally, non-enzymatic component of C3 and C5 convertases. Generated following cleavage by complement proteases (C1S, MASP2 or GZMK, depending on the complement pathway), it covalently attaches to the surface of pathogens, where it acts as an opsonin that marks the surface of antigens for removal. It then recruits the serine protease complement C2b to form the C3 and C5 convertases, which cleave and activate C3 and C5, respectively, the next components of the complement pathways. Complement C4b-B isotype catalyzes the transacylation of the thioester carbonyl group to form ester bonds with carbohydrate antigens, while C4b-A isotype is responsible for effective binding to form amide bonds with immune aggregates or protein antigens. Putative humoral mediator released following cleavage by complement proteases (C1S, MASP2 or GZMK, depending on the complement pathway). While it is strongly similar to anaphylatoxins, its role is unclear. Was reported to act as a mediator of local inflammatory process; however these effects were probably due to contamination with C3a and/C5a anaphylatoxins in biological assays. The chain is Complement C4-B from Homo sapiens (Human).